The sequence spans 168 residues: Transcriptional regulator MraZ (168 aa).

SpoVT-AbrB domains follow at residues 8–51 (EYNQ…GGDR) and 90–140 (ALNM…KADT).

Belongs to the MraZ family. In terms of assembly, forms oligomers.

Its subcellular location is the cytoplasm. It is found in the nucleoid. In Cereibacter sphaeroides (strain ATCC 17029 / ATH 2.4.9) (Rhodobacter sphaeroides), this protein is Transcriptional regulator MraZ.